The primary structure comprises 306 residues: Glutaminase (306 aa).

Substrate contacts are provided by serine 64, asparagine 115, glutamate 159, asparagine 166, tyrosine 190, tyrosine 242, and valine 260.

Belongs to the glutaminase family. As to quaternary structure, homotetramer.

It carries out the reaction L-glutamine + H2O = L-glutamate + NH4(+). This is Glutaminase from Aeromonas salmonicida (strain A449).